Consider the following 374-residue polypeptide: S-adenosylmethionine synthase 2 (374 aa).

Glutamate 11 contacts Mg(2+). Position 17 (histidine 17) interacts with ATP. K(+) is bound at residue glutamate 45. Residues glutamate 58 and glutamine 101 each coordinate L-methionine. Residues 169–171 (DGK), 237–240 (SGRF), aspartate 248, 254–255 (RK), alanine 271, lysine 275, and lysine 279 contribute to the ATP site. L-methionine is bound at residue aspartate 248. Lysine 279 provides a ligand contact to L-methionine.

This sequence belongs to the AdoMet synthase family. Homotetramer. The cofactor is Mn(2+). Mg(2+) is required as a cofactor. It depends on Co(2+) as a cofactor. K(+) serves as cofactor. In terms of tissue distribution, expressed in vegetative and reproductive tissues.

The protein localises to the cytoplasm. It catalyses the reaction L-methionine + ATP + H2O = S-adenosyl-L-methionine + phosphate + diphosphate. The protein operates within amino-acid biosynthesis; S-adenosyl-L-methionine biosynthesis; S-adenosyl-L-methionine from L-methionine: step 1/1. In terms of biological role, catalyzes the formation of S-adenosylmethionine from methionine and ATP. The reaction comprises two steps that are both catalyzed by the same enzyme: formation of S-adenosylmethionine (AdoMet) and triphosphate, and subsequent hydrolysis of the triphosphate. In Pisum sativum (Garden pea), this protein is S-adenosylmethionine synthase 2 (SAMS2).